Consider the following 263-residue polypeptide: Esterase mokD (263 aa).

Active-site charge relay system residues include Ser-134, Asp-208, and His-236.

This sequence belongs to the LovG family.

It carries out the reaction dihydromonacolin L-[lovastatin nonaketide synthase] + H2O = holo-[lovastatin nonaketide synthase] + dihydromonacolin L carboxylate + H(+). It participates in polyketide biosynthesis; lovastatin biosynthesis. Esterase; part of the gene cluster that mediates the biosynthesis of monakolin K, also known as lovastatin, and which acts as a potent competitive inhibitor of HMG-CoA reductase. Monakolin K biosynthesis is performed in two stages. The first stage is catalyzed by the nonaketide synthase mokA, which belongs to type I polyketide synthases and catalyzes the iterative nine-step formation of the polyketide. This PKS stage completed by the action of dehydrogenase mokE, which catalyzes the NADPH-dependent reduction of the unsaturated tetra-, penta- and heptaketide intermediates that arise during the mokA-mediated biosynthesis of the nonaketide chain and leads to dihydromonacolin L. Covalently bound dihydromonacolin L is released from mokA by the mokD esterase. Conversion of dihydromonacolin L into monacolin L and then monacolin J is subsequently performed with the participation of molecular oxygen and P450 monoogygenase mokC. Finally, mokF performs the conversion of monacoline J to monacoline K through the addition of the side-chain diketide moiety (2R)-2-methylbutanoate produced by the diketide synthase mokB. In Monascus pilosus (Red mold), this protein is Esterase mokD.